Here is a 304-residue protein sequence, read N- to C-terminus: PTB domain-containing engulfment adapter protein 1 (304 aa).

Threonine 16 is modified (phosphothreonine). In terms of domain architecture, PID spans 21-176 (SKHFIPYNAK…AGLQKRIQDL (156 aa)). The stretch at 158-202 (KDVETRKQIAGLQKRIQDLETENMELKNKVQDLENQLRITQVSAP) forms a coiled coil. Serine 223 carries the post-translational modification Phosphoserine. Positions 223–246 (SPISHQSSMPTRNGTQPPPVPSRS) are disordered. Polar residues predominate over residues 225-237 (ISHQSSMPTRNGT).

This sequence belongs to the ced-6 family. As to quaternary structure, homodimer. Interacts with clathrin. Interacts with GDP-bound ARF6, but not with GTP-bound ARF6. Part of a complex composed of GULP1, ACAP1 and ARF6. Interacts with ACAP1, LRP1, MEGF10 and STAB2. In terms of tissue distribution, widely expressed. Detected in macrophages, pancreas, kidney, skeletal muscle, heart, colon, intestine, lung, placenta and ovary.

It is found in the cytoplasm. Its function is as follows. May function as an adapter protein. Required for efficient phagocytosis of apoptotic cells. Modulates cellular glycosphingolipid and cholesterol transport. May play a role in the internalization and endosomal trafficking of various LRP1 ligands, such as PSAP. Increases cellular levels of GTP-bound ARF6. The polypeptide is PTB domain-containing engulfment adapter protein 1 (GULP1) (Homo sapiens (Human)).